The sequence spans 480 residues: Proline--tRNA ligase (480 aa).

Belongs to the class-II aminoacyl-tRNA synthetase family. ProS type 3 subfamily. In terms of assembly, homodimer.

It is found in the cytoplasm. The enzyme catalyses tRNA(Pro) + L-proline + ATP = L-prolyl-tRNA(Pro) + AMP + diphosphate. Catalyzes the attachment of proline to tRNA(Pro) in a two-step reaction: proline is first activated by ATP to form Pro-AMP and then transferred to the acceptor end of tRNA(Pro). This is Proline--tRNA ligase from Chloroflexus aurantiacus (strain ATCC 29364 / DSM 637 / Y-400-fl).